We begin with the raw amino-acid sequence, 162 residues long: Caveolin-2 (162 aa).

The Cytoplasmic portion of the chain corresponds to 1 to 86; sequence MGLETEKADV…FEISKYVMYK (86 aa). The residue at position 19 (Y19) is a Phosphotyrosine; by SRC. Phosphoserine occurs at positions 20 and 23. The residue at position 27 (Y27) is a Phosphotyrosine; by SRC. At S36 the chain carries Phosphoserine. The segment at residues 87 to 107 is an intramembrane region (helical); that stretch reads FLTVFLAIPLAFIAGILFATL. At 108–162 the chain is on the cytoplasmic side; that stretch reads SCLHIWILMPFVKTCLMVLPSVQTIWKSVTDVIIAPLCTSVGRSFSSVSLQLSQD.

It belongs to the caveolin family. In terms of assembly, monomer or homodimer. Interacts with CAV1; the interaction forms a stable heterooligomeric complex that is required for targeting to lipid rafts and for caveolae formation. Tyrosine phosphorylated forms do not form heterooligomers with the Tyr-19-phosphorylated form existing as a monomer or dimer, and the Tyr-27-form as a monomer only. Interacts (tyrosine phosphorylated form) with the SH2 domain-containing proteins, RASA1, NCK1 and SRC. Interacts (tyrosine phosphorylated form) with INSR, the interaction (Tyr-27-phosphorylated form) is increased on insulin stimulation. Interacts (Tyr-19 phosphorylated form) with MAPK1 (phosphorylated form); the interaction, promoted by insulin, leads to nuclear location and MAPK1 activation. Interacts with STAT3; the interaction is increased on insulin-induced tyrosine phosphorylation leading to STAT activation. In terms of processing, phosphorylated on serine and tyrosine residues. CAV1 promotes phosphorylation on Ser-23 which then targets the complex to the plasma membrane, lipid rafts and caveolae. Phosphorylation on Ser-36 appears to modulate mitosis in endothelial cells. Phosphorylation on both Tyr-19 and Tyr-27 is required for insulin-induced 'Ser-727' phosphorylation of STAT3 and its activation. Phosphorylation on Tyr-19 is required for insulin-induced phosphorylation of MAPK1 and DNA binding of STAT3. Tyrosine phosphorylation is induced by both EGF and insulin (By. similarity).

It is found in the nucleus. The protein localises to the cytoplasm. The protein resides in the golgi apparatus membrane. It localises to the cell membrane. Its subcellular location is the membrane. It is found in the caveola. Its function is as follows. May act as a scaffolding protein within caveolar membranes. Interacts directly with G-protein alpha subunits and can functionally regulate their activity. Acts as an accessory protein in conjunction with CAV1 in targeting to lipid rafts and driving caveolae formation. The Ser-36 phosphorylated form has a role in modulating mitosis in endothelial cells. Positive regulator of cellular mitogenesis of the MAPK signaling pathway. Required for the insulin-stimulated nuclear translocation and activation of MAPK1 and STAT3, and the subsequent regulation of cell cycle progression. The protein is Caveolin-2 (CAV2) of Pongo abelii (Sumatran orangutan).